The following is a 152-amino-acid chain: Deoxyuridine 5'-triphosphate nucleotidohydrolase (152 aa).

Residues 71 to 73 (RSG), N84, and 88 to 90 (LID) contribute to the substrate site.

Belongs to the dUTPase family. Mg(2+) is required as a cofactor.

It catalyses the reaction dUTP + H2O = dUMP + diphosphate + H(+). The protein operates within pyrimidine metabolism; dUMP biosynthesis; dUMP from dCTP (dUTP route): step 2/2. Functionally, this enzyme is involved in nucleotide metabolism: it produces dUMP, the immediate precursor of thymidine nucleotides and it decreases the intracellular concentration of dUTP so that uracil cannot be incorporated into DNA. The sequence is that of Deoxyuridine 5'-triphosphate nucleotidohydrolase from Xanthomonas campestris pv. campestris (strain 8004).